The primary structure comprises 679 residues: Protein hook (679 aa).

A Calponin-homology (CH) domain is found at 6-123; the sequence is NEMYYSLLEW…RLLQLVLGCA (118 aa). Coiled-coil stretches lie at residues 135-437 and 480-574; these read EIMC…LKCG and QTAL…QEIL.

It belongs to the hook family. Homodimer. Interacts with microtubules via its N-terminus.

The protein localises to the cytoplasm. It is found in the cytoskeleton. Its subcellular location is the endosome. It localises to the synapse. Involved in endocytic trafficking by stabilizing organelles of the endocytic pathway. Probably acts as a cytoskeletal linker protein required to tether endosome vesicles to the cytoskeleton. Involved in modulation of endocytosis at stages required for down-regulation of membrane proteins that control synapse size. Not involved in synaptic vesicle recycling. Required in R7 cells for boss endocytosis into multivesicular bodies (MVBs). Has a role in regulating adult longevity. This chain is Protein hook, found in Drosophila simulans (Fruit fly).